The sequence spans 499 residues: Probable cytosol aminopeptidase (499 aa).

2 residues coordinate Mn(2+): Lys-267 and Asp-272. Lys-279 is a catalytic residue. Asp-290, Asp-349, and Glu-351 together coordinate Mn(2+). Arg-353 is an active-site residue.

The protein belongs to the peptidase M17 family. The cofactor is Mn(2+).

The protein resides in the cytoplasm. It catalyses the reaction Release of an N-terminal amino acid, Xaa-|-Yaa-, in which Xaa is preferably Leu, but may be other amino acids including Pro although not Arg or Lys, and Yaa may be Pro. Amino acid amides and methyl esters are also readily hydrolyzed, but rates on arylamides are exceedingly low.. The enzyme catalyses Release of an N-terminal amino acid, preferentially leucine, but not glutamic or aspartic acids.. Presumably involved in the processing and regular turnover of intracellular proteins. Catalyzes the removal of unsubstituted N-terminal amino acids from various peptides. This Buchnera aphidicola subsp. Acyrthosiphon pisum (strain Tuc7) protein is Probable cytosol aminopeptidase.